Reading from the N-terminus, the 472-residue chain is Endoplasmic reticulum oxidoreductin-2 (472 aa).

The first 37 residues, 1–37 (MAETDVGSVKGKEKGSGKRWILLIGAIAAVLLAVVVA), serve as a signal peptide directing secretion. N-linked (GlcNAc...) asparagine glycosylation occurs at asparagine 44. 6 disulfides stabilise this stretch: cysteine 55-cysteine 74, cysteine 57-cysteine 72, cysteine 111-cysteine 371, cysteine 120-cysteine 125, cysteine 221-cysteine 230, and cysteine 374-cysteine 377. 3 residues coordinate FAD: arginine 200, threonine 202, and tryptophan 213. The FAD site is built by serine 241 and histidine 244. A glycan (N-linked (GlcNAc...) asparagine) is linked at asparagine 267. Arginine 274 and arginine 281 together coordinate FAD. Asparagine 364 carries an N-linked (GlcNAc...) asparagine glycan.

The protein belongs to the EROs family. In terms of assembly, may function both as a monomer and a homodimer. Requires FAD as cofactor. In terms of processing, N-glycosylated.

The protein resides in the endoplasmic reticulum membrane. In terms of biological role, essential oxidoreductase that oxidizes proteins in the endoplasmic reticulum to produce disulfide bonds. Acts by oxidizing directly PDI isomerase through a direct disulfide exchange. Does not act as a direct oxidant of folding substrate, but relies on PDI to transfer oxidizing equivalent. Does not oxidize all PDI related proteins, suggesting that it can discriminate between PDI and related proteins. Its reoxidation probably involves electron transfer to molecular oxygen via FAD. Acts independently of glutathione. May be responsible for a significant proportion of reactive oxygen species (ROS) in the cell, thereby being a source of oxidative stress. In Arabidopsis thaliana (Mouse-ear cress), this protein is Endoplasmic reticulum oxidoreductin-2 (AERO2).